Here is a 417-residue protein sequence, read N- to C-terminus: Sterile alpha motif domain-containing protein 14 (417 aa).

Disordered regions lie at residues 37–299 (LLAK…WQEA) and 388–417 (AAAE…AKKS). Basic residues predominate over residues 40-49 (KGRRHRPSRS). Phosphoserine is present on residues S84 and S108. A compositionally biased stretch (low complexity) spans 135-153 (AAASCSPPRSAPSSDSSPS). Residues 160-173 (RAEPHSEDDSRDAS) are compositionally biased toward basic and acidic residues. 2 positions are modified to phosphoserine: S173 and S179. Low complexity-rich tracts occupy residues 244–260 (SGKG…PTCS) and 276–295 (STLS…PSGP). S279 carries the post-translational modification Phosphoserine. T283 is modified (phosphothreonine). In terms of domain architecture, SAM spans 326–389 (WTSQQVGQWL…KRKLKEMAAA (64 aa)). Residues 377-417 (ALVKRKLKEMAAAAEKERKAQEKAARQREKLRRREQEAKKS) are a coiled coil. Positions 390-417 (AEKERKAQEKAARQREKLRRREQEAKKS) are enriched in basic and acidic residues.

The chain is Sterile alpha motif domain-containing protein 14 (SAMD14) from Homo sapiens (Human).